The primary structure comprises 330 residues: 2-keto-3-deoxygluconate permease (330 aa).

Helical transmembrane passes span 10 to 30 (VPGGMMIIPLFLGAALNTFAP), 42 to 62 (ALITGTLPILGVFIFCVGATI), 77 to 97 (LLLGKIGFAALLGVIAAQFIP), 100 to 120 (GIQSGFFAGLSVLAIVAVMNE), 140 to 160 (GAFAFISTESGPFMTMVTFGV), 163 to 183 (LAAFPWETLAATVIPFLLGCI), 200 to 220 (PAIIPFFAFSLGNTLNFGMLI), 224 to 244 (LLGIFIGVSVVILSGSSLFLL), 254 to 274 (VAGVAASSTAGAAVAVPYALA), and 289 to 309 (AIIATSVIVTSLLTPLATVWV).

Belongs to the KdgT transporter family.

It localises to the cell membrane. The enzyme catalyses 2-dehydro-3-deoxy-D-gluconate(in) + H(+)(in) = 2-dehydro-3-deoxy-D-gluconate(out) + H(+)(out). Catalyzes the proton-dependent uptake of 2-keto-3-deoxygluconate (KDG) into the cell. The protein is 2-keto-3-deoxygluconate permease of Bacillus subtilis (strain 168).